A 224-amino-acid polypeptide reads, in one-letter code: Homeobox protein Hox-B6 (224 aa).

An Antp-type hexapeptide motif is present at residues 127 to 132; the sequence is VYPWMQ. Residues 146–205 constitute a DNA-binding region (homeobox); sequence GRRGRQTYTRYQTLELEKEFHYNRYLTRRRRIEIAHALCLTERQIKIWFQNRRMKWKKES. Ser214 is modified (phosphoserine).

It belongs to the Antp homeobox family.

The protein localises to the nucleus. Sequence-specific transcription factor which is part of a developmental regulatory system that provides cells with specific positional identities on the anterior-posterior axis. The protein is Homeobox protein Hox-B6 (HOXB6) of Homo sapiens (Human).